Here is a 165-residue protein sequence, read N- to C-terminus: 3-isopropylmalate dehydratase small subunit (165 aa).

The protein belongs to the LeuD family. LeuD type 2 subfamily. As to quaternary structure, heterodimer of LeuC and LeuD.

The enzyme catalyses (2R,3S)-3-isopropylmalate = (2S)-2-isopropylmalate. The protein operates within amino-acid biosynthesis; L-leucine biosynthesis; L-leucine from 3-methyl-2-oxobutanoate: step 2/4. In terms of biological role, catalyzes the isomerization between 2-isopropylmalate and 3-isopropylmalate, via the formation of 2-isopropylmaleate. The protein is 3-isopropylmalate dehydratase small subunit of Saccharolobus islandicus (strain M.14.25 / Kamchatka #1) (Sulfolobus islandicus).